The chain runs to 432 residues: Trigger factor (432 aa).

The PPIase FKBP-type domain occupies 161 to 246 (EDRVTIDFTG…LKKVEERELP (86 aa)).

The protein belongs to the FKBP-type PPIase family. Tig subfamily. Homodimer and monomer. In vivo most of the ribosomes are in complex with monomeric TF. Uncomplexed TF, however, is in a monomer-dimer equilibrium with approximately two thirds of TF existing in a dimeric state.

It localises to the cytoplasm. It catalyses the reaction [protein]-peptidylproline (omega=180) = [protein]-peptidylproline (omega=0). Functionally, involved in protein export. Acts as a chaperone by maintaining the newly synthesized protein in an open conformation. Functions as a peptidyl-prolyl cis-trans isomerase. The chain is Trigger factor from Escherichia fergusonii (strain ATCC 35469 / DSM 13698 / CCUG 18766 / IAM 14443 / JCM 21226 / LMG 7866 / NBRC 102419 / NCTC 12128 / CDC 0568-73).